Reading from the N-terminus, the 525-residue chain is Adenosine deaminase AGSA (525 aa).

The first 25 residues, 1–25 (MSSFSTHNFVAIATFVCWFCCLATA), serve as a signal peptide directing secretion. An N-linked (GlcNAc...) asparagine glycan is attached at N81. Residues H117 and H119 each contribute to the Zn(2+) site. A substrate-binding site is contributed by D120. N132 carries an N-linked (GlcNAc...) asparagine glycan. C142 and C163 are joined by a disulfide. N188 carries N-linked (GlcNAc...) asparagine glycosylation. Residues 207 to 214 (WVRFNKYF) and G329 each bind substrate. An N-linked (GlcNAc...) asparagine glycan is attached at N334. H361 serves as a coordination point for Zn(2+). Residue E364 is the Proton donor of the active site. H389 serves as the catalytic Proton acceptor. Residue D446 coordinates Zn(2+). D447 is a substrate binding site.

Belongs to the metallo-dependent hydrolases superfamily. Adenosine and AMP deaminases family. ADGF subfamily. Zn(2+) serves as cofactor. In terms of tissue distribution, detected in egg cordons and in the developing central nervous system. Not detected in adult central nervous system (at protein level). Atrial gland.

It localises to the secreted. It catalyses the reaction adenosine + H2O + H(+) = inosine + NH4(+). Functionally, adenosine deaminase that may contribute to the degradation of extracellular adenosine, a signaling molecule that controls a variety of cellular responses. May play a role in the regulation of cell proliferation. The polypeptide is Adenosine deaminase AGSA (Aplysia californica (California sea hare)).